The following is a 475-amino-acid chain: Cysteine--tRNA ligase (475 aa).

Cys28 is a binding site for Zn(2+). The 'HIGH' region motif lies at 30–40; that stretch reads PTVYDETHIGH. Residues Cys208, His233, and Glu237 each contribute to the Zn(2+) site. A 'KMSKS' region motif is present at residues 265–269; it reads KMSKS. Residue Lys268 participates in ATP binding.

This sequence belongs to the class-I aminoacyl-tRNA synthetase family. It depends on Zn(2+) as a cofactor.

It is found in the cytoplasm. It carries out the reaction tRNA(Cys) + L-cysteine + ATP = L-cysteinyl-tRNA(Cys) + AMP + diphosphate. This is Cysteine--tRNA ligase from Methanococcus vannielii (strain ATCC 35089 / DSM 1224 / JCM 13029 / OCM 148 / SB).